Here is a 1139-residue protein sequence, read N- to C-terminus: Hapless 2 (1139 aa).

An N-terminal signal peptide occupies residues 1–22 (MCRAIAVALIVYLAQHYILAHA). Residues 23–630 (EVIASGRLEK…TKKCWSKFGR (608 aa)) lie on the Extracellular side of the membrane. Cystine bridges form between cysteine 33/cysteine 44, cysteine 136/cysteine 164, cysteine 147/cysteine 210, cysteine 165/cysteine 383, cysteine 167/cysteine 190, cysteine 366/cysteine 390, and cysteine 475/cysteine 482. Over residues 241–272 (APSPTTATTSATPRTNNSSSANSTNSTNSPAP) the composition is skewed to low complexity. Residues 241–283 (APSPTTATTSATPRTNNSSSANSTNSTNSPAPQFLSPPAPSTR) are disordered. Residue asparagine 497 is glycosylated (N-linked (GlcNAc...) asparagine). Cysteine 515 and cysteine 556 are disulfide-bonded. O-linked (GlcNAc...) threonine glycosylation occurs at threonine 577. The chain crosses the membrane as a helical span at residues 631–651 (LLGIIGGALVGLGLLAVALKF). Over 652–1139 (GWLASLAASC…PVYDWQAPPK (488 aa)) the chain is Cytoplasmic. Disordered regions lie at residues 689–719 (GGGQ…AEVA) and 741–1139 (HGGG…APPK). A compositionally biased stretch (basic and acidic residues) spans 753-767 (QHADTRHLQDRDSRA). Residues 770–789 (GGASIGSSSAGGSSSLSSYS) show a composition bias toward low complexity. Basic and acidic residues predominate over residues 829-851 (WDARGRSPRVADEHGSPRQRYDG). Residues 868–884 (YDGGSGGGGGGGGGGYG) show a composition bias toward gly residues. Residues 887–904 (APPPQGPPPHPVGAPPPP) show a composition bias toward pro residues. Gly residues-rich tracts occupy residues 919 to 943 (PGGG…GVDQ) and 955 to 965 (RGGGGPGGMRG). Pro residues predominate over residues 978–991 (GPHPHAPPPPPPPQ). Basic and acidic residues predominate over residues 1018-1029 (GREEEAGGDRRG). Over residues 1040–1049 (GGRGAGGGRG) the composition is skewed to gly residues. Pro residues predominate over residues 1054-1067 (IGSPPPGPLQPPEY). Gly residues-rich tracts occupy residues 1078-1096 (GAGG…GGVG) and 1106-1118 (GGRG…GRGR).

It belongs to the HAP2/GCS1 family. Monomer. Homotrimer. Membrane contact and insertion (via its extracellular domain) into a lipid membrane probably triggers trimerization. The protein present at the cell membrane is rapidly degraded after fusion between male (minus) and female (plus) gametes, contrary to the protein present in intracellular pools. This may represent a mechanism to avoid fusion of several male gametes with a single female gamete. Post-translationally, N-glycosylated.

The protein localises to the cell membrane. It localises to the cell projection. Its subcellular location is the cytoplasmic vesicle membrane. Functionally, during fertilization, required on male (minus) gametes for their fusion with female (plus) gametes. Required for membrane fusion, but not for the initial adhesion between gametes. Inserts (via its extracellular domain) into lipid membranes (in vitro). Probably initiates the fusion of gamete cell membranes by inserting its extracellular domain into the cell membrane of a female gamete. In Chlamydomonas reinhardtii (Chlamydomonas smithii), this protein is Hapless 2.